We begin with the raw amino-acid sequence, 510 residues long: D-alanine--D-alanyl carrier protein ligase (510 aa).

157-158 contacts ATP; that stretch reads TS. A D-alanine-binding site is contributed by D202. 297–302 provides a ligand contact to ATP; that stretch reads NTYGPT. V306 contacts D-alanine. Residues D389 and K498 each coordinate ATP. D-alanine is bound at residue K498.

It belongs to the ATP-dependent AMP-binding enzyme family. DltA subfamily.

The protein localises to the cytoplasm. The catalysed reaction is holo-[D-alanyl-carrier protein] + D-alanine + ATP = D-alanyl-[D-alanyl-carrier protein] + AMP + diphosphate. It functions in the pathway cell wall biogenesis; lipoteichoic acid biosynthesis. Functionally, catalyzes the first step in the D-alanylation of lipoteichoic acid (LTA), the activation of D-alanine and its transfer onto the D-alanyl carrier protein (Dcp) DltC. In an ATP-dependent two-step reaction, forms a high energy D-alanyl-AMP intermediate, followed by transfer of the D-alanyl residue as a thiol ester to the phosphopantheinyl prosthetic group of the Dcp. D-alanylation of LTA plays an important role in modulating the properties of the cell wall in Gram-positive bacteria, influencing the net charge of the cell wall. The polypeptide is D-alanine--D-alanyl carrier protein ligase (Listeria monocytogenes serotype 4b (strain CLIP80459)).